Reading from the N-terminus, the 129-residue chain is Small ribosomal subunit protein uS9 (129 aa).

The protein belongs to the universal ribosomal protein uS9 family.

The polypeptide is Small ribosomal subunit protein uS9 (Chlorobium phaeovibrioides (strain DSM 265 / 1930) (Prosthecochloris vibrioformis (strain DSM 265))).